Reading from the N-terminus, the 362-residue chain is Oxygen-dependent coproporphyrinogen-III oxidase (362 aa).

Serine 118 contributes to the substrate binding site. 2 residues coordinate a divalent metal cation: histidine 122 and histidine 132. Residue histidine 132 is the Proton donor of the active site. Residue asparagine 134 to arginine 136 participates in substrate binding. A divalent metal cation-binding residues include histidine 166 and histidine 196. The interval tyrosine 286 to glutamate 321 is important for dimerization.

Belongs to the aerobic coproporphyrinogen-III oxidase family. Homodimer. The cofactor is a divalent metal cation.

The protein resides in the cytoplasm. The catalysed reaction is coproporphyrinogen III + O2 + 2 H(+) = protoporphyrinogen IX + 2 CO2 + 2 H2O. Its pathway is porphyrin-containing compound metabolism; protoporphyrin-IX biosynthesis; protoporphyrinogen-IX from coproporphyrinogen-III (O2 route): step 1/1. Functionally, involved in the heme and chlorophyll biosynthesis. Catalyzes the aerobic oxidative decarboxylation of propionate groups of rings A and B of coproporphyrinogen-III to yield the vinyl groups in protoporphyrinogen-IX. The polypeptide is Oxygen-dependent coproporphyrinogen-III oxidase (Synechococcus sp. (strain CC9605)).